We begin with the raw amino-acid sequence, 913 residues long: Alanine--tRNA ligase (913 aa).

His-608, His-612, Cys-711, and His-715 together coordinate Zn(2+).

Belongs to the class-II aminoacyl-tRNA synthetase family. It depends on Zn(2+) as a cofactor.

It is found in the cytoplasm. The enzyme catalyses tRNA(Ala) + L-alanine + ATP = L-alanyl-tRNA(Ala) + AMP + diphosphate. Its function is as follows. Catalyzes the attachment of alanine to tRNA(Ala) in a two-step reaction: alanine is first activated by ATP to form Ala-AMP and then transferred to the acceptor end of tRNA(Ala). Also edits incorrectly charged Ser-tRNA(Ala) and Gly-tRNA(Ala) via its editing domain. The polypeptide is Alanine--tRNA ligase (Methanocorpusculum labreanum (strain ATCC 43576 / DSM 4855 / Z)).